Here is a 260-residue protein sequence, read N- to C-terminus: Small ribosomal subunit protein eS1 (260 aa).

The residue at position 30 (Lys30) is an N6-acetyllysine; alternate. Residue Lys30 forms a Glycyl lysine isopeptide (Lys-Gly) (interchain with G-Cter in SUMO2); alternate linkage. An N6-acetyllysine modification is found at Lys52. Tyr151 is subject to ADP-ribosyltyrosine. Positions 228-260 (HGEGSSSGKATGDETGAKVERADGYEPPVQESV) are disordered. Residues Ser232 and Ser233 each carry the phosphoserine modification. The span at 238–251 (TGDETGAKVERADG) shows a compositional bias: basic and acidic residues. Lys245 carries the N6-acetyllysine; alternate modification. A Glycyl lysine isopeptide (Lys-Gly) (interchain with G-Cter in SUMO2); alternate cross-link involves residue Lys245. Tyr252 carries the post-translational modification Phosphotyrosine. A Phosphoserine modification is found at Ser259.

This sequence belongs to the eukaryotic ribosomal protein eS1 family. As to quaternary structure, component of the small ribosomal subunit. Mature ribosomes consist of a small (40S) and a large (60S) subunit. The 40S subunit contains about 33 different proteins and 1 molecule of RNA (18S). The 60S subunit contains about 49 different proteins and 3 molecules of RNA (28S, 5.8S and 5S). Identified in a IGF2BP1-dependent mRNP granule complex containing untranslated mRNAs. Binds with high affinity to IPO4. Interacts with DDIT3. Part of the small subunit (SSU) processome, composed of more than 70 proteins and the RNA chaperone small nucleolar RNA (snoRNA) U3. ADP-ribosylated at Tyr-151 by PARP1 in presence of HPF1.

It is found in the cytoplasm. It localises to the nucleus. The protein resides in the nucleolus. In terms of biological role, component of the small ribosomal subunit. The ribosome is a large ribonucleoprotein complex responsible for the synthesis of proteins in the cell. Part of the small subunit (SSU) processome, first precursor of the small eukaryotic ribosomal subunit. During the assembly of the SSU processome in the nucleolus, many ribosome biogenesis factors, an RNA chaperone and ribosomal proteins associate with the nascent pre-rRNA and work in concert to generate RNA folding, modifications, rearrangements and cleavage as well as targeted degradation of pre-ribosomal RNA by the RNA exosome. May play a role during erythropoiesis through regulation of transcription factor DDIT3. This is Small ribosomal subunit protein eS1 from Felis catus (Cat).